A 613-amino-acid chain; its full sequence is Ribosome-associated molecular chaperone SSB1 (613 aa).

The interval 1-391 (MADGVFQGAI…ILTGQSTSDE (391 aa)) is nucleotide binding domain (NBD). ATP contacts are provided by residues 16–18 (TTY), Lys73, 205–207 (GGT), 271–278 (ERAKRTLS), and Gly342. The interval 392–402 (TKDLLLLDVAP) is inter-domain linker. Positions 403-613 (LSLGVGMQGD…RVVTKAMSSR (211 aa)) are substrate binding domain (SBD). Residues 516–612 (SEDIEKMVNQ…KRVVTKAMSS (97 aa)) form a lid domain (SBDalpha) region. The Nuclear export signal signature appears at 574-582 (IEAALADAL).

Belongs to the heat shock protein 70 family. Ssb-type Hsp70 subfamily. In terms of assembly, binds to ribosomes. Binds close to the ribosomal tunnel exit via contacts with both ribosomal proteins and rRNA. Directly interacts with nascent polypeptides. This interaction is dependent on the ribosome-associated complex (RAC). Interacts with SSE1. Interacts with FES1.

The protein resides in the cytoplasm. The catalysed reaction is ATP + H2O = ADP + phosphate + H(+). Ribosome-bound, Hsp70-type chaperone that assists in the cotranslational folding of newly synthesized proteins in the cytosol. Stimulates folding by interacting with nascent chains, binding to short, largely hydrophobic sequences exposed by unfolded proteins, thereby stabilizing longer, more slowly translated, and aggregation-prone nascent polypeptides and domains that cannot fold stably until fully synthesized. The Hsp70-protein substrate interaction depends on ATP-binding and on allosteric regulation between the NBD and the SBD. The ATP-bound state is characterized by a fast exchange rate of substrate (low affinity state), while in the ADP-bound state exchange is much slower (high affinity state). During the Hsp70 cycle, the chaperone switches between the ATP-bound state (open conformation) and the ADP-bound state (closed conformation) by major conformational rearrangements involving mainly the lid domain. Ssb cooperates with a specific Hsp40/Hsp70 co-chaperone termed the ribosome-associated complex (RAC), which stimulates the ATPase activity of the ribosome-associated pool of Ssbs and switches it to the high affinity substrate binding state. Hsp110 chaperone SSE1 and FES1 act as nucleotide exchange factors that cause substrate release. The protein is Ribosome-associated molecular chaperone SSB1 (SSB1) of Nakaseomyces delphensis (Yeast).